Consider the following 213-residue polypeptide: Glutathione S-transferase DHAR1, mitochondrial (213 aa).

Glutathione-binding residues include K8 and D19. L-ascorbate-binding residues include K8 and D19. Positions 10 to 83 (AVGAPDHLGD…DVIVGILEEK (74 aa)) constitute a GST N-terminal domain. The active-site Nucleophile is C20. S-glutathionyl cysteine is present on C20. Positions 20 to 25 (CPFSQR) match the Glutathione-binding motif. Glutathione contacts are provided by K47, V60, and S73. A GST C-terminal domain is found at 84–213 (YPDPPLKTPA…ISGWAPKVNP (130 aa)). The short motif at 133–137 (HLKSH) is the Copper-binding element. The glutathione site is built by H160 and W207. Residue K210 coordinates L-ascorbate.

This sequence belongs to the GST superfamily. DHAR family. In terms of assembly, monomer. Interacts with copper (Cu). Spontaneous S-glutathionylation in the presence of oxidized glutathione (GSSG). As to expression, expressed at least in roots and leaves.

The protein localises to the mitochondrion. It is found in the cytoplasm. Its subcellular location is the cytosol. The protein resides in the peroxisome. It localises to the membrane. The enzyme catalyses RX + glutathione = an S-substituted glutathione + a halide anion + H(+). It carries out the reaction L-dehydroascorbate + 2 glutathione = glutathione disulfide + L-ascorbate. Displays a dual function. As a soluble protein, exhibits glutathione-dependent thiol transferase and dehydroascorbate (DHA) reductase activities. Key component of the ascorbate recycling system. Involved in the redox homeostasis, especially in scavenging of ROS under oxidative stresses, subsequently to biotic or abiotic inducers. As a peripheral membrane protein, could also function as voltage-gated ion channel. The chain is Glutathione S-transferase DHAR1, mitochondrial from Arabidopsis thaliana (Mouse-ear cress).